Here is a 30-residue protein sequence, read N- to C-terminus: Cyclotide hyen-F (30 aa).

The segment at residues 1 to 30 (GLPCGESCVYIPCISTVLGCSCSNKVCYRN) is a cross-link (cyclopeptide (Gly-Asn)). 3 disulfide bridges follow: Cys4/Cys20, Cys8/Cys22, and Cys13/Cys27.

Post-translationally, this is a cyclic peptide. Detected in seeds (at protein level).

Its function is as follows. Probably participates in a plant defense mechanism. In Pigea enneasperma (Spade flower), this protein is Cyclotide hyen-F.